We begin with the raw amino-acid sequence, 281 residues long: Splicing regulator RBM11 (281 aa).

Residues 10 to 87 enclose the RRM domain; sequence RTVFVGNLEA…RPINVQYRFG (78 aa). The disordered stretch occupies residues 184-281; it reads PSSYKWTHQQ…FRKSKKKKRY (98 aa). Composition is skewed to polar residues over residues 187 to 217 and 229 to 242; these read YKWTHQQPSDSDLYQMTAPLPNSASVSSSLN and YKWTHQQPSDSDLY. Residues 245–280 carry the Bipartite nuclear localization signal motif; sequence NKRKRQKQTSDSDSSTDNNRGNECSQKFRKSKKKKR. Basic residues predominate over residues 271 to 281; it reads KFRKSKKKKRY.

As to quaternary structure, homodimer. As to expression, expressed in brain, hippocampus, prefrontal cortex, cerebellum, spinal cord, testis, mammary gland, spleen and kidney. Also expressed in fetal brain.

It is found in the nucleus. It localises to the nucleoplasm. Its subcellular location is the nucleus speckle. Its function is as follows. Tissue-specific splicing factor with potential implication in the regulation of alternative splicing during neuron and germ cell differentiation. Antagonizes SRSF1-mediated BCL-X splicing. May affect the choice of alternative 5' splice sites by binding to specific sequences in exons and antagonizing the SR protein SRSF1. The sequence is that of Splicing regulator RBM11 from Homo sapiens (Human).